The sequence spans 128 residues: Fluoride-specific ion channel FluC (128 aa).

The next 4 helical transmembrane spans lie at Ile5–Ala25, Leu35–Phe55, Leu67–Val87, and Phe96–Leu116. Residues Gly75 and Thr78 each coordinate Na(+).

It belongs to the fluoride channel Fluc/FEX (TC 1.A.43) family.

It is found in the cell inner membrane. It carries out the reaction fluoride(in) = fluoride(out). With respect to regulation, na(+) is not transported, but it plays an essential structural role and its presence is essential for fluoride channel function. Functionally, fluoride-specific ion channel. Important for reducing fluoride concentration in the cell, thus reducing its toxicity. The polypeptide is Fluoride-specific ion channel FluC (Burkholderia ambifaria (strain MC40-6)).